The chain runs to 98 residues: NADH-ubiquinone oxidoreductase chain 4L (98 aa).

3 consecutive transmembrane segments (helical) span residues 1–21, 29–49, and 61–81; these read MSMV…GMLV, SLLC…VTIL, and IILL…LVMV.

This sequence belongs to the complex I subunit 4L family. Core subunit of respiratory chain NADH dehydrogenase (Complex I) which is composed of 45 different subunits.

The protein localises to the mitochondrion inner membrane. It carries out the reaction a ubiquinone + NADH + 5 H(+)(in) = a ubiquinol + NAD(+) + 4 H(+)(out). Core subunit of the mitochondrial membrane respiratory chain NADH dehydrogenase (Complex I) which catalyzes electron transfer from NADH through the respiratory chain, using ubiquinone as an electron acceptor. Part of the enzyme membrane arm which is embedded in the lipid bilayer and involved in proton translocation. This is NADH-ubiquinone oxidoreductase chain 4L (MT-ND4L) from Odobenus rosmarus rosmarus (Atlantic walrus).